Consider the following 134-residue polypeptide: Cell division protein SepF (134 aa).

This sequence belongs to the SepF family. As to quaternary structure, homodimer. Interacts with FtsZ.

Its subcellular location is the cytoplasm. In terms of biological role, cell division protein that is part of the divisome complex and is recruited early to the Z-ring. Probably stimulates Z-ring formation, perhaps through the cross-linking of FtsZ protofilaments. Its function overlaps with FtsA. This chain is Cell division protein SepF, found in Caldanaerobacter subterraneus subsp. tengcongensis (strain DSM 15242 / JCM 11007 / NBRC 100824 / MB4) (Thermoanaerobacter tengcongensis).